We begin with the raw amino-acid sequence, 595 residues long: Inactive glycosyltransferase 25 family member 3 (595 aa).

Positions 1–22 (MRAARAAPLLQLLLLLGPWLEA) are cleaved as a signal peptide. Asn75, Asn153, Asn237, and Asn360 each carry an N-linked (GlcNAc...) asparagine glycan. Residues 548 to 595 (DTETSSPWDDDSGRLISWSGSQKTLRSPRLDLTGSSGHSLQPQPRDEL) are disordered. Over residues 580 to 589 (TGSSGHSLQP) the composition is skewed to polar residues. The Prevents secretion from ER signature appears at 592–595 (RDEL).

Belongs to the glycosyltransferase 25 family. Ubiquitous. Highly expressed in secretory and nervous tissues.

The protein resides in the endoplasmic reticulum lumen. In terms of biological role, probable cell adhesion protein involved in leukocyte transmigration across the blood-brain barrier. Does not express any beta-galactosyltransferase activity in vitro. This chain is Inactive glycosyltransferase 25 family member 3 (CERCAM), found in Homo sapiens (Human).